Here is a 220-residue protein sequence, read N- to C-terminus: Protein-L-isoaspartate O-methyltransferase (220 aa).

Residue Ser69 is part of the active site.

The protein belongs to the methyltransferase superfamily. L-isoaspartyl/D-aspartyl protein methyltransferase family.

It localises to the cytoplasm. The catalysed reaction is [protein]-L-isoaspartate + S-adenosyl-L-methionine = [protein]-L-isoaspartate alpha-methyl ester + S-adenosyl-L-homocysteine. Catalyzes the methyl esterification of L-isoaspartyl residues in peptides and proteins that result from spontaneous decomposition of normal L-aspartyl and L-asparaginyl residues. It plays a role in the repair and/or degradation of damaged proteins. In Alcanivorax borkumensis (strain ATCC 700651 / DSM 11573 / NCIMB 13689 / SK2), this protein is Protein-L-isoaspartate O-methyltransferase.